The sequence spans 126 residues: UPF0325 protein VFMJ11_2099 (126 aa).

This sequence belongs to the UPF0325 family.

The chain is UPF0325 protein VFMJ11_2099 from Aliivibrio fischeri (strain MJ11) (Vibrio fischeri).